The primary structure comprises 257 residues: MSTSQPGACPCQGAASRPAILYALLSSSLKAVPRPRSRCLCRQHRPVQLCAPHRTCREALDVLAKTVAFLRNLPSFWQLPPQDQRRLLQGCWGPLFLLGLAQDAVTFEVAEAPVPSILKKILLEEPSSSGGSGQLPDRPQPSLAAVQWLQCCLESFWSLELSPKEYACLKGTILFNPDVPGLQAASHIGHLQQEAHWVLCEVLEPWCPAAQGRLTRVLLTASTLKSIPTSLLGDLFFRPIIGDVDIAGLLGDMLLLR.

Residues 16-257 (SRPAILYALL…GLLGDMLLLR (242 aa)) enclose the NR LBD domain. Symmetric dimethylarginine; by PRMT5 is present on arginine 57.

It belongs to the nuclear hormone receptor family. NR0 subfamily. In terms of assembly, interacts (via N-terminus) with NEUROD1 (via N-terminus and C-terminus). Interacts with ID2. Interacts with RORG, NFIL3, NR1D1 and BHLHE41. Heterodimer; efficient DNA binding requires dimerization with another bHLH protein. Interacts with RARA, RXRA, THRB, NR5A1, NR5A2, NR1I3, PPARA, PPARG and EID1. Interacts with HNF4A; the resulting heterodimer is transcriptionally inactive. Interacts with DDX3X; this interaction disrupts the interaction between HNF4 and NR0B2/SHP that forms inactive heterodimers and enhances the formation of active HNF4 homodimers. Arginine methylation by PRMT5 enhances repression activity of metabolic genes in liver in response to bile acid signaling, by increasing interaction with cofactors. Liver. Low levels of expression were detected in heart and pancreas.

The protein resides in the nucleus. The protein localises to the cytoplasm. In terms of biological role, transcriptional regulator that acts as a negative regulator of receptor-dependent signaling pathways. Specifically inhibits transactivation of the nuclear receptor with which it interacts. Inhibits transcriptional activity of NEUROD1 on E-box-containing promoter by interfering with the coactivation function of the p300/CBP-mediated transcription complex for NEUROD1. Essential component of the liver circadian clock which via its interaction with NR1D1 and RORG regulates NPAS2-mediated hepatic lipid metabolism. Regulates the circadian expression of cytochrome P450 (CYP) enzymes. Represses: NR5A2 and HNF4A to down-regulate CYP2C38, NFLI3 to up-regulate CYP2A5, BHLHE41/HNF1A axis to up-regulate CYP1A2, CYP2E1 and CYP3A11, and NR1D1 to up-regulate CYP2B10, CYP4A10 and CYP4A14. The chain is Nuclear receptor subfamily 0 group B member 2 (NR0B2) from Homo sapiens (Human).